The sequence spans 229 residues: Cytidylate kinase (229 aa).

12-20 (GPSGSGKGT) serves as a coordination point for ATP.

The protein belongs to the cytidylate kinase family. Type 1 subfamily.

The protein resides in the cytoplasm. The enzyme catalyses CMP + ATP = CDP + ADP. It catalyses the reaction dCMP + ATP = dCDP + ADP. This Pseudomonas fluorescens (strain ATCC BAA-477 / NRRL B-23932 / Pf-5) protein is Cytidylate kinase.